Consider the following 748-residue polypeptide: Phosphoenolpyruvate-dependent phosphotransferase system (748 aa).

A GAF domain is found at 1–127; that stretch reads MLTRLREIVE…RRQLLGVLVV (127 aa). The segment at 128 to 170 is linker; sequence QQRELRQYDESEESFLVTLATQMAAILSQSQLTALFGQYRQTR. A PTS EI region spans residues 171 to 748; it reads IRALPAAPGV…GMGGLIRGGL (578 aa). H356 serves as the catalytic Tele-phosphohistidine intermediate. Positions 462 and 498 each coordinate phosphoenolpyruvate. Residues E597 and D621 each contribute to the Mg(2+) site. Residues 620–621 and R631 each bind phosphoenolpyruvate; that span reads ND. The active-site Proton donor is the C668.

Belongs to the PEP-utilizing enzyme family. Requires Mg(2+) as cofactor.

It is found in the cytoplasm. The catalysed reaction is L-histidyl-[protein] + phosphoenolpyruvate = N(pros)-phospho-L-histidyl-[protein] + pyruvate. Inhibited by GDP and FAD. Its function is as follows. Component of the phosphoenolpyruvate-dependent nitrogen-metabolic phosphotransferase system (nitrogen-metabolic PTS), that seems to be involved in regulating nitrogen metabolism. Enzyme I-Ntr transfers the phosphoryl group from phosphoenolpyruvate (PEP) to the phosphoryl carrier protein (NPr). Could function in the transcriptional regulation of sigma-54 dependent operons in conjunction with the NPr (PtsO) and EIIA-Ntr (PtsN) proteins. Enzyme I-Ntr is specific for NPr. In Escherichia coli (strain K12), this protein is Phosphoenolpyruvate-dependent phosphotransferase system (ptsP).